The chain runs to 590 residues: MTAEDSTTAMNSDPTVGSSTKVPEGVAGAPNEAALLALMERTGYNMVQENGQRKYGGPPPGWEGPHPQRGCEVFVGKIPRDVYEDELVPVFETVGRIYELRLMMDFDGKNRGYAFVMYCHKHEAKRAVRELNNYEIRPGRLLGVCCSVDNCRLFIGGIPKMKKRGEILEEIAKVTEGVLNVIVYASAADKMKNRGFAFVEYESHRAAAMARRKLMPGRIQLWGHQIAVDWAEPEIDVDEDVMQTVKILYVRNLMIETTEETIKRSFGQFNPGCVERVKKIRDYAFVHFTSREDAVHAMNNLNGTELEGSCLEVTLAKPVDKEQYSRYQKAAKGGGGSAEAVAQQPSYVYSCDPYTLAYYGYPYNALIGPNRDYFVKTGSIRGRGRGAAGNRTPGPRGSYLGGYSAGRGIYSRYHEGKGKQQEKGYELVPNLEISAVNPVAIKPGTVAIPAIGAQYSMFQAAPAPKIIEDGKIHTMEHMISPIAVQPDPATAAAAAAAAAAAAVIPAVSTPPPFQGRPITPVYTVAPNVPRIPTAGIYGASYVPFAAPATATIATLQKNAAAAVYGGYAGYIPQAFPAALQVPIHDVYQTY.

The span at 1 to 21 (MTAEDSTTAMNSDPTVGSSTK) shows a compositional bias: polar residues. The tract at residues 1-26 (MTAEDSTTAMNSDPTVGSSTKVPEGV) is disordered. RRM domains lie at 71–149 (CEVF…CSVD), 151–233 (CRLF…WAEP), and 246–318 (KILY…LAKP). Asymmetric dimethylarginine; alternate is present on residues Arg-396 and Arg-407. An omega-N-methylarginine; alternate mark is found at Arg-396 and Arg-407.

The protein belongs to the RRM RBM47 family. As to quaternary structure, homodimer. Interacts with A1CF. Interacts with APOBEC1; form an mRNA editing complex. Interacts with RBPMS.

It localises to the nucleus. It is found in the cytoplasm. In terms of biological role, single-stranded RNA-binding protein that functions in a variety of RNA processes, including alternative splicing, RNA stabilization, and RNA editing. Functions as an enzyme-substrate adapter for the cytidine deaminase APOBEC1. With APOBEC1 forms an mRNA editing complex involved into cytidine to uridine editing of a variety of mRNA molecules. Through the binding of their 3'UTR, also stabilizes a variety of mRNAs and regulates the expression of genes such as the interferon alpha/beta receptor and interleukin-10. Also involved in the alternative splicing of several genes including TJP1. Binds the pre-mRNA (U)GCAUG consensus sequences in downstream intronic regions of alternative exons regulating their exclusion and inclusion into mRNAs. Independently of its RNA-binding activity, could negatively regulate MAVS by promoting its lysosomal degradation. The sequence is that of RNA-binding protein 47 from Rattus norvegicus (Rat).